The chain runs to 432 residues: GTPase Obg (432 aa).

An Obg domain is found at 1 to 158; that stretch reads MFVDQVKIYV…RNIILELKLL (158 aa). Positions 159 to 329 constitute an OBG-type G domain; the sequence is ADVGLVGFPS…LLFAIADLLE (171 aa). GTP-binding positions include 165–172, 190–194, 212–215, 282–285, and 310–312; these read GFPSVGKS, FTTLV, DLPG, NKMD, and SAA. Mg(2+) contacts are provided by S172 and T192. The OCT domain maps to 350–428; the sequence is KYEKEEPPFT…LLDYEFEFVD (79 aa).

The protein belongs to the TRAFAC class OBG-HflX-like GTPase superfamily. OBG GTPase family. Monomer. Requires Mg(2+) as cofactor.

Its subcellular location is the cytoplasm. In terms of biological role, an essential GTPase which binds GTP, GDP and possibly (p)ppGpp with moderate affinity, with high nucleotide exchange rates and a fairly low GTP hydrolysis rate. Plays a role in control of the cell cycle, stress response, ribosome biogenesis and in those bacteria that undergo differentiation, in morphogenesis control. The protein is GTPase Obg of Geobacillus kaustophilus (strain HTA426).